Here is a 188-residue protein sequence, read N- to C-terminus: Probable manganese efflux pump MntP (188 aa).

6 consecutive transmembrane segments (helical) span residues 3–23, 41–61, 66–86, 106–128, 143–163, and 168–188; these read FTATVLLAFGMSMDAFAASIG, LIFGAVETLTPLIGWGLGILA, LEWNHWIAFVLLIFLGGRMII, WLLVTTAIATSLDAMAVGVGLAF, ATLIMSTLGMMIGRFIGPMLG, and ILGGVVLIGIGVQILWTHFHG.

This sequence belongs to the MntP (TC 9.B.29) family.

It localises to the cell inner membrane. In terms of biological role, probably functions as a manganese efflux pump. The polypeptide is Probable manganese efflux pump MntP (Salmonella typhimurium (strain LT2 / SGSC1412 / ATCC 700720)).